Reading from the N-terminus, the 731-residue chain is E3 ubiquitin-protein ligase SMURF1 (731 aa).

The C2 domain maps to 1–120 (MSNPGTRRNG…TGYQRLDLCK (120 aa)). Position 200 is a phosphoserine (Ser-200). The segment at 216–237 (EVRGPLQTPQNRPHGHQSPELP) is disordered. WW domains lie at 234-267 (PELP…DPRI) and 280-313 (GPLP…DPRL). Glycyl lysine isopeptide (Lys-Gly) (interchain with G-Cter in ubiquitin) cross-links involve residues Lys-355 and Lys-357. Residues 394 to 731 (RPKDLKKRLM…VEETCGFAVE (338 aa)) form the HECT domain. Catalysis depends on Cys-699, which acts as the Glycyl thioester intermediate.

Interacts with TRAF4. Interacts (via HECT domain) with FBXL15 (via LRR repeats). Interacts with SMAD7 and TGFBR1; SMAD7 recruits SMURF1 to TGFBR1 and regulates TGF-beta receptor degradation. Interacts with MAVS; the interaction is mediated by NDFIP1. Auto-ubiquitinated in presence of NDFIP1. Ubiquitinated by the SCF(FBXL15) complex at Lys-355 and Lys-357, leading to its degradation by the proteasome. Lys-357 is the primary ubiquitination site.

It is found in the cytoplasm. The protein resides in the cell membrane. It catalyses the reaction S-ubiquitinyl-[E2 ubiquitin-conjugating enzyme]-L-cysteine + [acceptor protein]-L-lysine = [E2 ubiquitin-conjugating enzyme]-L-cysteine + N(6)-ubiquitinyl-[acceptor protein]-L-lysine.. The protein operates within protein modification; protein ubiquitination. Functionally, E3 ubiquitin-protein ligase that acts as a negative regulator of BMP signaling pathway. Mediates ubiquitination and degradation of SMAD1 and SMAD5, 2 receptor-regulated SMADs specific for the BMP pathway. Promotes ubiquitination and subsequent proteasomal degradation of TRAF family members and RHOA. Promotes ubiquitination and subsequent proteasomal degradation of MAVS. Acts as an antagonist of TGF-beta signaling by ubiquitinating TGFBR1 and targeting it for degradation. Plays a role in dendrite formation by melanocytes. The sequence is that of E3 ubiquitin-protein ligase SMURF1 (Smurf1) from Mus musculus (Mouse).